The following is a 75-amino-acid chain: Putative membrane protein insertion efficiency factor 2 (75 aa).

The protein belongs to the UPF0161 family.

The protein localises to the cell membrane. Functionally, could be involved in insertion of integral membrane proteins into the membrane. This Bacillus licheniformis (strain ATCC 14580 / DSM 13 / JCM 2505 / CCUG 7422 / NBRC 12200 / NCIMB 9375 / NCTC 10341 / NRRL NRS-1264 / Gibson 46) protein is Putative membrane protein insertion efficiency factor 2.